Consider the following 268-residue polypeptide: Tryptophan synthase alpha chain (268 aa).

Catalysis depends on proton acceptor residues glutamate 49 and aspartate 60.

This sequence belongs to the TrpA family. Tetramer of two alpha and two beta chains.

It catalyses the reaction (1S,2R)-1-C-(indol-3-yl)glycerol 3-phosphate + L-serine = D-glyceraldehyde 3-phosphate + L-tryptophan + H2O. It functions in the pathway amino-acid biosynthesis; L-tryptophan biosynthesis; L-tryptophan from chorismate: step 5/5. The alpha subunit is responsible for the aldol cleavage of indoleglycerol phosphate to indole and glyceraldehyde 3-phosphate. The chain is Tryptophan synthase alpha chain from Haemophilus influenzae (strain PittGG).